Reading from the N-terminus, the 88-residue chain is Cell division topological specificity factor (88 aa).

Belongs to the MinE family.

Its function is as follows. Prevents the cell division inhibition by proteins MinC and MinD at internal division sites while permitting inhibition at polar sites. This ensures cell division at the proper site by restricting the formation of a division septum at the midpoint of the long axis of the cell. This is Cell division topological specificity factor from Carboxydothermus hydrogenoformans (strain ATCC BAA-161 / DSM 6008 / Z-2901).